A 115-amino-acid polypeptide reads, in one-letter code: UPF0102 protein NMB2089 (115 aa).

Belongs to the UPF0102 family.

In Neisseria meningitidis serogroup B (strain ATCC BAA-335 / MC58), this protein is UPF0102 protein NMB2089.